We begin with the raw amino-acid sequence, 1414 residues long: Phenyloxazoline synthase MbtB (1414 aa).

A Carrier 1 domain is found at 5 to 78 (TACSEIIRAE…AWSQLVSAGT (74 aa)). O-(pantetheine 4'-phosphoryl)serine is present on S39. The interval 96-394 (EGEPFPVAPM…SSLLLDVDLT (299 aa)) is condensation/cyclization. Residues 579–975 (SYAQLRDQAS…RLPGVHAAAA (397 aa)) form an adenylation region. One can recognise a Carrier 2 domain in the interval 1057–1135 (APRTVLQRAL…ALAQLLTGRE (79 aa)). O-(pantetheine 4'-phosphoryl)serine is present on S1094. The interval 1188 to 1413 (GAVLVFPHAG…AVARMVSADV (226 aa)) is thioesterase.

It belongs to the ATP-dependent AMP-binding enzyme family. MbtB subfamily. Pantetheine 4'-phosphate serves as cofactor. In terms of processing, 4'-phosphopantetheine is transferred from CoA to a specific serine in each of the two carrier protein domains, leading to their activation from apo to holo forms.

The protein operates within siderophore biosynthesis; mycobactin biosynthesis. Functionally, involved in the initial steps of the mycobactin biosynthetic pathway. Putatively couples activated salicylic acid with serine or threonine and cyclizes this precursor to the hydroxyphenyloxazoline ring system present in this class of siderophores. Essential for growth in macrophages. The sequence is that of Phenyloxazoline synthase MbtB (mbtB) from Mycobacterium tuberculosis (strain CDC 1551 / Oshkosh).